We begin with the raw amino-acid sequence, 1090 residues long: Pullulanase (1090 aa).

The N-terminal stretch at 1–19 (MLRYTRNALVLGSLVLLSG) is a signal peptide. Residue Cys-20 is the site of N-palmitoyl cysteine attachment. A lipid anchor (S-diacylglycerol cysteine) is attached at Cys-20. Asp-684 (nucleophile) is an active-site residue. Glu-713 serves as the catalytic Proton donor.

It belongs to the glycosyl hydrolase 13 family. Homotrimer.

The protein resides in the cell membrane. It carries out the reaction Hydrolysis of (1-&gt;6)-alpha-D-glucosidic linkages in pullulan, amylopectin and glycogen, and in the alpha- and beta-limit dextrins of amylopectin and glycogen.. The protein is Pullulanase (pulA) of Klebsiella pneumoniae.